The sequence spans 257 residues: Putative transcription factor R430 (257 aa).

Disordered stretches follow at residues 1 to 35 and 58 to 77; these read MEKFFITDNTTDNTTDNTTDNTTDNTTDKLTDNNS and SLKSPSDKSSSGKSSIPNKS. Over residues 7-25 the composition is skewed to low complexity; it reads TDNTTDNTTDNTTDNTTDN. The span at 26 to 35 shows a compositional bias: basic and acidic residues; that stretch reads TTDKLTDNNS.

Belongs to the nucleo-cytoplasmic large DNA viruses (NCLDVs) VLTF-3 family.

Functionally, putative transcription factor. This is Putative transcription factor R430 from Acanthamoeba polyphaga (Amoeba).